The sequence spans 457 residues: Glutamate--tRNA ligase 1 (457 aa).

A 'HIGH' region motif is present at residues 9–19 (PSPTGYIHIGN). Residues 250-254 (GLSKR) carry the 'KMSKS' region motif. Lys253 contributes to the ATP binding site.

The protein belongs to the class-I aminoacyl-tRNA synthetase family. Glutamate--tRNA ligase type 1 subfamily. Monomer.

It is found in the cytoplasm. It catalyses the reaction tRNA(Glu) + L-glutamate + ATP = L-glutamyl-tRNA(Glu) + AMP + diphosphate. Functionally, catalyzes the attachment of glutamate to tRNA(Glu) in a two-step reaction: glutamate is first activated by ATP to form Glu-AMP and then transferred to the acceptor end of tRNA(Glu). This chain is Glutamate--tRNA ligase 1, found in Brucella canis (strain ATCC 23365 / NCTC 10854 / RM-666).